Here is a 458-residue protein sequence, read N- to C-terminus: Adenylosuccinate synthetase (458 aa).

GTP-binding positions include 11 to 17 and 39 to 41; these read GDEGKGG and GHT. Aspartate 12 acts as the Proton acceptor in catalysis. Aspartate 12 and glycine 39 together coordinate Mg(2+). Residues 12-15, 37-40, threonine 127, arginine 141, glutamine 232, threonine 247, and arginine 330 each bind IMP; these read DEGK and NAGH. The active-site Proton donor is the histidine 40. Residue 326 to 332 participates in substrate binding; that stretch reads TVTGRPR. GTP is bound by residues arginine 332, 358-360, and 443-445; these read HLD and GVG.

Belongs to the adenylosuccinate synthetase family. In terms of assembly, homodimer. It depends on Mg(2+) as a cofactor.

The protein resides in the cytoplasm. It carries out the reaction IMP + L-aspartate + GTP = N(6)-(1,2-dicarboxyethyl)-AMP + GDP + phosphate + 2 H(+). The protein operates within purine metabolism; AMP biosynthesis via de novo pathway; AMP from IMP: step 1/2. Functionally, plays an important role in the de novo pathway of purine nucleotide biosynthesis. Catalyzes the first committed step in the biosynthesis of AMP from IMP. This is Adenylosuccinate synthetase from Haloarcula marismortui (strain ATCC 43049 / DSM 3752 / JCM 8966 / VKM B-1809) (Halobacterium marismortui).